Here is a 276-residue protein sequence, read N- to C-terminus: Undecaprenyl-diphosphatase (276 aa).

The next 8 membrane-spanning stretches (helical) occupy residues 1–21 (MSWL…FLPV), 39–59 (AGAS…LVYF), 84–104 (YWLG…GLLF), 115–135 (LWLV…AEYA), 159–179 (LALV…LFLG), 190–210 (FLLA…DAFA), 222–242 (QLLV…AWFL), and 253–273 (FVGY…TGVV).

The protein belongs to the UppP family.

The protein localises to the cell membrane. The catalysed reaction is di-trans,octa-cis-undecaprenyl diphosphate + H2O = di-trans,octa-cis-undecaprenyl phosphate + phosphate + H(+). Catalyzes the dephosphorylation of undecaprenyl diphosphate (UPP). Confers resistance to bacitracin. In Mycolicibacterium gilvum (strain PYR-GCK) (Mycobacterium gilvum (strain PYR-GCK)), this protein is Undecaprenyl-diphosphatase.